Reading from the N-terminus, the 186-residue chain is Translation initiation factor IF-3 (186 aa).

This sequence belongs to the IF-3 family. In terms of assembly, monomer.

Its subcellular location is the cytoplasm. In terms of biological role, IF-3 binds to the 30S ribosomal subunit and shifts the equilibrium between 70S ribosomes and their 50S and 30S subunits in favor of the free subunits, thus enhancing the availability of 30S subunits on which protein synthesis initiation begins. This is Translation initiation factor IF-3 from Chlamydia muridarum (strain MoPn / Nigg).